We begin with the raw amino-acid sequence, 31 residues long: Palustrin-2a (31 aa).

Cysteine 23 and cysteine 29 are disulfide-bonded.

In terms of tissue distribution, expressed by the skin glands.

It is found in the secreted. Its function is as follows. Antimicrobial activity against Gram-negative bacterium E.coli. The polypeptide is Palustrin-2a (Lithobates palustris (Pickerel frog)).